The following is a 420-amino-acid chain: E3 ubiquitin-protein ligase pellino homolog 2 (420 aa).

An FHA; atypical domain is found at 15–202 (EPVKYGELVV…MHPRGGFTEE (188 aa)).

Belongs to the pellino family. Interacts with TRAF6, IRAK1, IRAK4 and MAP3K7. Interacts with BCL10; this interaction is impaired by SOCS3. Post-translationally, phosphorylated by IRAK1 and IRAK4 enhancing its E3 ligase activity.

The catalysed reaction is S-ubiquitinyl-[E2 ubiquitin-conjugating enzyme]-L-cysteine + [acceptor protein]-L-lysine = [E2 ubiquitin-conjugating enzyme]-L-cysteine + N(6)-ubiquitinyl-[acceptor protein]-L-lysine.. Its pathway is protein modification; protein ubiquitination. In terms of biological role, E3 ubiquitin ligase catalyzing the covalent attachment of ubiquitin moieties onto substrate proteins. Involved in the TLR and IL-1 signaling pathways via interaction with the complex containing IRAK kinases and TRAF6. Mediates IL1B-induced IRAK1 'Lys-63'-linked polyubiquitination and possibly 'Lys-48'-linked ubiquitination. May be important for LPS- and IL1B-induced MAP3K7-dependent, but not MAP3K3-dependent, NF-kappa-B activation. Can activate the MAP (mitogen activated protein) kinase pathway leading to activation of ELK1. This Homo sapiens (Human) protein is E3 ubiquitin-protein ligase pellino homolog 2 (PELI2).